A 3073-amino-acid polypeptide reads, in one-letter code: Adhesion G-protein coupled receptor G4 (3073 aa).

The N-terminal stretch at 1 to 25 (MRKHILHQRLCGLILVSSFIFLTDS) is a signal peptide. Residues 26–2691 (LSLKGKRLDF…RSTVDAVNER (2666 aa)) lie on the Extracellular side of the membrane. Positions 29–228 (KGKRLDFYGE…SPTVDRRLRC (200 aa)) constitute a Pentraxin (PTX) domain. Intrachain disulfides connect cysteine 58–cysteine 123 and cysteine 200–cysteine 228. Residue asparagine 233 is glycosylated (N-linked (GlcNAc...) asparagine). The disordered stretch occupies residues 253-272 (SQTTGLNPHKTSHSSTLLPE). Asparagine 662 carries N-linked (GlcNAc...) asparagine glycosylation. Polar residues-rich tracts occupy residues 671-696 (GNAT…ESKV) and 929-951 (GNSA…SSST). 2 disordered regions span residues 671–697 (GNAT…SKVT) and 924–951 (SEKS…SSST). Asparagine 1141, asparagine 1304, and asparagine 1495 each carry an N-linked (GlcNAc...) asparagine glycan. 3 disordered regions span residues 1565-1595 (FTSS…AGPT), 1741-1760 (TLTN…STPT), and 1945-1972 (ITLS…SDSR). Positions 1945–1954 (ITLSSNPSVN) are enriched in polar residues. Residues 1955-1972 (SRATSPTWSSSSLPSDSR) show a composition bias toward low complexity. Positions 2535 to 2684 (SSEEVIAPQI…GVLMDLSRST (150 aa)) constitute a GAIN-B domain. Disulfide bonds link cysteine 2635-cysteine 2666 and cysteine 2654-cysteine 2668. Residues 2635 to 2684 (CAFWDFDTNNGLGGWNPSGCKLKESNINYTICQCNHLTHFGVLMDLSRST) form a GPS region. Positions 2673-2684 (HFGVLMDLSRST) are stachel. The chain crosses the membrane as a helical span at residues 2692–2712 (ILVIITYTGCGISSIFLGIAM). Over 2713–2728 (VTYIAFHKLRKDYPSK) the chain is Cytoplasmic. Residues 2729 to 2749 (ILINLCTALLMLNLAFLVNSW) traverse the membrane as a helical segment. Topologically, residues 2750–2755 (LTSFQK) are extracellular. Residues 2756–2776 (VGLCITAAVALHYFLLVSLTW) form a helical membrane-spanning segment. Cysteine 2759 and cysteine 2836 are oxidised to a cystine. Over 2777–2798 (MGLEAVHMYFALVKVFNTYIPN) the chain is Cytoplasmic. Residues 2799-2819 (YILKFCLAGWGIPAITVAIIL) form a helical membrane-spanning segment. Residues 2820 to 2842 (SVRKDLYGTLSPTTPFCWIKDDH) lie on the Extracellular side of the membrane. A helical transmembrane segment spans residues 2843–2863 (IFYISVVAYFCLIFLMNLSMF). At 2864–2892 (CTVLVQLTSVKSQSQKTRKKMILNDLKGT) the chain is on the cytoplasmic side. The chain crosses the membrane as a helical span at residues 2893–2913 (ISLTFLLGLTWGFAFFAWGPV). A topological domain (extracellular) is located at residue arginine 2914. A helical membrane pass occupies residues 2915 to 2935 (IFFLYLFAICNTLQGFLIFVF). At 2936–3073 (YCVMKESVRE…SSGLGEMFNL (138 aa)) the chain is on the cytoplasmic side.

The protein belongs to the G-protein coupled receptor 2 family. Adhesion G-protein coupled receptor (ADGR) subfamily. As to quaternary structure, homodimer; homodimerizes via its Pentraxin domain in a calcium-independent manner. Heterodimer of 2 chains generated by proteolytic processing; the large extracellular N-terminal fragment and the membrane-bound C-terminal fragment predominantly remain associated and non-covalently linked. Post-translationally, autoproteolytically processed at the GPS region of the GAIN-B domain; this cleavage modulates receptor activity.

The protein resides in the membrane. Forms a heterodimer of 2 chains generated by proteolytic processing that remain associated through non-covalent interactions mediated by the GAIN-B domain. In the inactivated receptor, the Stachel sequence (also named stalk) is embedded in the GAIN-B domain, where it adopts a beta-strand conformation. On activation, the Stachel moves into the 7 transmembrane region and adopts a twisted hook-shaped configuration that forms contacts within the receptor, leading to coupling of a G-alpha protein, which activates signaling. The cleaved GAIN-B and N-terminal domains can then dissociate from the rest of the receptor. Orphan adhesion G-protein coupled receptor (aGPCR). Ligand binding causes a conformation change that triggers signaling via guanine nucleotide-binding proteins (G proteins) and modulates the activity of downstream effectors, such as adenylate cyclase. ADGRG4 is coupled to G(s) G proteins and mediates activation of adenylate cyclase activity. May be act as sensor of mechanical forces. The sequence is that of Adhesion G-protein coupled receptor G4 from Mus musculus (Mouse).